We begin with the raw amino-acid sequence, 454 residues long: Serine/threonine-protein kinase NLK2 (454 aa).

Positions 67-356 (PEPDRPIGYG…AKDALAHPYL (290 aa)) constitute a Protein kinase domain. ATP is bound by residues 73 to 81 (IGYGAFGVV) and K96. The active-site Proton acceptor is D193.

This sequence belongs to the protein kinase superfamily. CMGC Ser/Thr protein kinase family. MAP kinase subfamily. In terms of assembly, interacts with sox11, hmgxb4/hmg2l1, rnf138/narf, stat3.1 and mef2a. Mg(2+) is required as a cofactor.

The protein resides in the nucleus. It localises to the cytoplasm. It carries out the reaction L-seryl-[protein] + ATP = O-phospho-L-seryl-[protein] + ADP + H(+). The enzyme catalyses L-threonyl-[protein] + ATP = O-phospho-L-threonyl-[protein] + ADP + H(+). Activated by tyrosine and threonine phosphorylation. In terms of biological role, negatively regulates Wnt/beta-catenin-signaling during development. Plays a role together with sox11 in neural induction during early embryogenesis. Involved in TGFbeta-mediated mesoderm induction in early embryos, acting downstream of map3k7/tak1 to phosphorylate stat3. Augments the rnf138/narf-directed ubiquitination and degradation of tcf/lef by enhancing the association of rnf138/narf and tcf/lef. Phosphorylates mef2a to play a role in anterior neural development, including eye formation. This chain is Serine/threonine-protein kinase NLK2 (nlk.2), found in Xenopus tropicalis (Western clawed frog).